Here is a 153-residue protein sequence, read N- to C-terminus: Ribosomal RNA large subunit methyltransferase H (153 aa).

S-adenosyl-L-methionine contacts are provided by residues leucine 70, glycine 102, and 121–126 (LSRMTF).

This sequence belongs to the RNA methyltransferase RlmH family. In terms of assembly, homodimer.

The protein localises to the cytoplasm. It carries out the reaction pseudouridine(1915) in 23S rRNA + S-adenosyl-L-methionine = N(3)-methylpseudouridine(1915) in 23S rRNA + S-adenosyl-L-homocysteine + H(+). Its function is as follows. Specifically methylates the pseudouridine at position 1915 (m3Psi1915) in 23S rRNA. This chain is Ribosomal RNA large subunit methyltransferase H, found in Geotalea uraniireducens (strain Rf4) (Geobacter uraniireducens).